Here is a 118-residue protein sequence, read N- to C-terminus: Ribonuclease P protein component (118 aa).

The protein belongs to the RnpA family. In terms of assembly, consists of a catalytic RNA component (M1 or rnpB) and a protein subunit.

It carries out the reaction Endonucleolytic cleavage of RNA, removing 5'-extranucleotides from tRNA precursor.. In terms of biological role, RNaseP catalyzes the removal of the 5'-leader sequence from pre-tRNA to produce the mature 5'-terminus. It can also cleave other RNA substrates such as 4.5S RNA. The protein component plays an auxiliary but essential role in vivo by binding to the 5'-leader sequence and broadening the substrate specificity of the ribozyme. The chain is Ribonuclease P protein component from Vibrio cholerae serotype O1 (strain ATCC 39541 / Classical Ogawa 395 / O395).